Here is a 1608-residue protein sequence, read N- to C-terminus: DNA-directed RNA polymerase III subunit rpc2 (1608 aa).

Residues cysteine 1557, cysteine 1560, cysteine 1569, and cysteine 1572 each coordinate Zn(2+). Residues 1557–1572 (CKNCGFLGYEGYCQYC) form a C4-type zinc finger.

The protein belongs to the RNA polymerase beta chain family. Component of the RNA polymerase III (Pol III) complex. In terms of processing, this protein undergoes a protein self splicing that involves a post-translational excision of the intervening region (intein) followed by peptide ligation.

It localises to the nucleus. The enzyme catalyses RNA(n) + a ribonucleoside 5'-triphosphate = RNA(n+1) + diphosphate. DNA-dependent RNA polymerase catalyzes the transcription of DNA into RNA using the four ribonucleoside triphosphates as substrates. Second largest core component of RNA polymerase III which synthesizes small RNAs, such as 5S rRNA and tRNAs. Proposed to contribute to the polymerase catalytic activity and forms the polymerase active center together with the largest subunit. Pol III is composed of mobile elements and rpc2 is part of the core element with the central large cleft and probably a clamp element that moves to open and close the cleft. The polypeptide is DNA-directed RNA polymerase III subunit rpc2 (polr3b) (Dictyostelium discoideum (Social amoeba)).